Here is a 99-residue protein sequence, read N- to C-terminus: Large ribosomal subunit protein eL21 (99 aa).

The segment covering 1 to 18 has biased composition (basic residues); sequence MVKHSRGNRTRSRKLLKK. The interval 1 to 26 is disordered; the sequence is MVKHSRGNRTRSRKLLKKSPRERGAV.

Belongs to the eukaryotic ribosomal protein eL21 family.

The protein is Large ribosomal subunit protein eL21 of Metallosphaera sedula (strain ATCC 51363 / DSM 5348 / JCM 9185 / NBRC 15509 / TH2).